Here is a 157-residue protein sequence, read N- to C-terminus: SsrA-binding protein (157 aa).

The tract at residues 135 to 157 (KRDTIKDREGKREVERAMKTNHR) is disordered.

This sequence belongs to the SmpB family.

It localises to the cytoplasm. Its function is as follows. Required for rescue of stalled ribosomes mediated by trans-translation. Binds to transfer-messenger RNA (tmRNA), required for stable association of tmRNA with ribosomes. tmRNA and SmpB together mimic tRNA shape, replacing the anticodon stem-loop with SmpB. tmRNA is encoded by the ssrA gene; the 2 termini fold to resemble tRNA(Ala) and it encodes a 'tag peptide', a short internal open reading frame. During trans-translation Ala-aminoacylated tmRNA acts like a tRNA, entering the A-site of stalled ribosomes, displacing the stalled mRNA. The ribosome then switches to translate the ORF on the tmRNA; the nascent peptide is terminated with the 'tag peptide' encoded by the tmRNA and targeted for degradation. The ribosome is freed to recommence translation, which seems to be the essential function of trans-translation. The sequence is that of SsrA-binding protein from Albidiferax ferrireducens (strain ATCC BAA-621 / DSM 15236 / T118) (Rhodoferax ferrireducens).